Consider the following 1398-residue polypeptide: MDSKDTQKLLKEHRIPCIDVGWLVRPSASTSKSSRPGKSESKANSVAPDIQMDTARPPVFETSVDSSSSILSSNDKGRRHSVAASLLMDNQRANAGSTSVPTNIPPPRGRSKSVVETNLSNVEADSGHHHHHRHHHHTEDAPAPKKVGFFKSLFGHRKKDQEQQEKERERKERSPSPTHVDRGAAIRRERTATISAESPPPLQYNAPPSYNDTVVPLTRSKTESEVYYENHPQSYYHGRMRTYHSPEEGKVDGTSPADDHNYGGSRPDPRLMDFLRYYKSKDYKLAAFKEGNFIKSSASPTTKKNRRASFSLHNDKPQPAKSLAHQKFDAKGRPIPPHPDAPKLPSAFRKKHPSNASIVDTVDSNSDVSSSAQNNNQTPSSHKFGAFLRKVTSYGNNNNNSTNASSLSANVNNPDTSSTSLWSSSSMEFDPSKITTVPGLENIRPLKHVSFATNTYFNDPPQQICSKNPRKGEVEVKPNGSVVIHRLTPQERKKIMESTSLGVVVGGTGQLKLLNPEEDDANAKSKEEMAPQKQNEVEAHDEEDNNSQRRNIVMAAAEAAAEARAKEAPNELKRIVTNNEEEVTVSKTASHLTIDKPMISRRGASTSSLASMVSSDTNGTNADDEGEILPPPSLKIPHDIVYTRCCHLREILPIPATLKQLKKGSTDPIPILQLRNPRPSMVEIWSFSDFLSIAPVLCLSLDGVQLTVQMLRIILSSLVYKQHFQKLSLRNTPLDEEGWKVLCYFVSKAKSLHSIDLTMVPSIKTNVQKPSKSSLKSKILRMQCNLENRSDMNWDLLTASIALMGGLEEIVISGAKMNSAQFKNFILVACIATERLGLAYNGLSKSQCDDLAKWMVQSKVTGLDVGFNDLNGKLSSFTDAVLGKIQKANEKNVFKFLSLNGTNLRVNEHDTFENNEVLKLISVLCYLENLKFLDISNNPAIFPHCVPTLIDFLPVFVNLVRLHIDYNNLSSTSVVMLAEILPMCSRLNYFSMLGTELDLASSKALAEAVRKSSSLMTLDVDYVYMPENIKEKISLYALRNIQGELKRVNSDDKDIKDSQFSSLQDQLSLLLTEKADNSEHYNKMVENFMAKIALARIKISKVVHDLFDLKLNGQLNLEGKEALIRLCFIEASLERGCDLLKQRHNNTLKSPEAVSKSRKGGNQAQPNSESCQRMLLSSSILQNSDHIALMPFGSAIVEKSSPDAEDAVEFREGDDSNVNHEDVPANDQQFRDEVDIKNKYSIIKRELEHEKLVGGGDLPVDKEILNRAAQSLDSDQIKEFLLKNDVSTILGVIDELHSQGYHLHHIFKKQGNQEETAFRTKDEQQSSQSNDSSANASPTTDPISTGSNTSRTNDNAHIPPTDAPGFDKFMNNAEENAIDAAYDDVLDKIQDARNSSTK.

An N-acetylmethionine modification is found at methionine 1. A disordered region spans residues 21–77; sequence GWLVRPSASTSKSSRPGKSESKANSVAPDIQMDTARPPVFETSVDSSSSILSSNDKG. A compositionally biased stretch (polar residues) spans 27–36; sequence SASTSKSSRP. A compositionally biased stretch (low complexity) spans 63 to 73; that stretch reads SVDSSSSILSS. At serine 81 the chain carries Phosphoserine. 3 disordered regions span residues 90-144, 156-186, and 191-210; these read NQRA…APAP, HRKKDQEQQEKERERKERSPSPTHVDRGAAI, and TATISAESPPPLQYNAPPSY. 2 stretches are compositionally biased toward polar residues: residues 91 to 102 and 114 to 123; these read QRANAGSTSVPT and VVETNLSNVE. A compositionally biased stretch (basic and acidic residues) spans 159–186; the sequence is KDQEQQEKERERKERSPSPTHVDRGAAI. Residue lysine 221 forms a Glycyl lysine isopeptide (Lys-Gly) (interchain with G-Cter in ubiquitin) linkage. Position 222 is a phosphothreonine (threonine 222). 4 disordered regions span residues 244–270, 296–382, 395–428, and 515–548; these read HSPEEGKVDGTSPADDHNYGGSRPDPR, SSAS…PSSH, GNNNNNSTNASSLSANVNNPDTSSTSLWSSSSME, and NPEEDDANAKSKEEMAPQKQNEVEAHDEEDNNSQ. A phosphoserine mark is found at serine 309, serine 311, serine 354, and serine 357. Low complexity predominate over residues 357-371; sequence SIVDTVDSNSDVSSS. The span at 372–381 shows a compositional bias: polar residues; the sequence is AQNNNQTPSS. Over residues 396 to 426 the composition is skewed to low complexity; it reads NNNNNSTNASSLSANVNNPDTSSTSLWSSSS. The segment covering 521 to 538 has biased composition (basic and acidic residues); sequence ANAKSKEEMAPQKQNEVE. Threonine 577 is subject to Phosphothreonine. Residues 605–615 show a composition bias toward low complexity; the sequence is STSSLASMVSS. Disordered stretches follow at residues 605 to 630, 1148 to 1169, and 1203 to 1223; these read STSSLASMVSSDTNGTNADDEGEILP, LKSPEAVSKSRKGGNQAQPNSE, and DAEDAVEFREGDDSNVNHEDV. Positions 1160 to 1169 are enriched in polar residues; the sequence is GGNQAQPNSE. Residues 1208-1223 show a composition bias toward basic and acidic residues; the sequence is VEFREGDDSNVNHEDV. The interval 1227–1258 is tau/MAP repeat-like; that stretch reads DQQFRDEVDIKNKYSIIKRELEHEKLVGGGDL. Residues 1313-1372 are disordered; that stretch reads QEETAFRTKDEQQSSQSNDSSANASPTTDPISTGSNTSRTNDNAHIPPTDAPGFDKFMNN. Residues 1325–1337 are compositionally biased toward low complexity; that stretch reads QSSQSNDSSANAS. Residues 1338 to 1355 are compositionally biased toward polar residues; sequence PTTDPISTGSNTSRTNDN.

It localises to the cytoplasm. The protein resides in the cytoskeleton. It is found in the spindle. Functionally, essential for the formation and/or stabilization of microtubules. Binds to microtubules in vitro. This is MAP-homologous protein 1 (MHP1) from Saccharomyces cerevisiae (strain ATCC 204508 / S288c) (Baker's yeast).